A 279-amino-acid chain; its full sequence is Vomeronasal type-1 receptor A8 (279 aa).

At 1–19 the chain is on the extracellular side; the sequence is MNKDHTLYCSVYIRNAFFS. Residues 20 to 40 form a helical membrane-spanning segment; the sequence is EIGIGISANSCLLLFHTFMFI. The Cytoplasmic portion of the chain corresponds to 41-49; the sequence is RGHRPRLTD. Residues 50 to 70 form a helical membrane-spanning segment; the sequence is LPIGFVALIHLVMLLLAAYIT. At 71–93 the chain is on the extracellular side; that stretch reads EDFFMSSGGWDDITCKLVIFLHR. Cysteines 85 and 172 form a disulfide. A helical membrane pass occupies residues 94–114; the sequence is FFRSLSVCATCLLSVFQAIIL. The Cytoplasmic segment spans residues 115–134; it reads CPQSSHLAKLKQNSPHQLSY. A helical transmembrane segment spans residues 135 to 155; that stretch reads FFIFLSIFYTSISSQILIAAI. The Extracellular segment spans residues 156-159; the sequence is PTQN. Residue asparagine 159 is glycosylated (N-linked (GlcNAc...) asparagine). A helical transmembrane segment spans residues 160 to 180; the sequence is ITFVNLIYITNSCSFLPLSSS. At 181-187 the chain is on the cytoplasmic side; that stretch reads MQHTFST. The helical transmembrane segment at 188–208 threads the bilayer; sequence LLTFRNVFVIGLMGLSTCYMA. Residues 209 to 238 are Extracellular-facing; the sequence is TLLCRHKTRSQRLQNSKLSPKATPEQRALR. A helical membrane pass occupies residues 239–259; sequence TILMLMSFFLLMSTFDSIISY. Residues 260–279 lie on the Cytoplasmic side of the membrane; the sequence is SRTIITGKSTALLCPDSCRS.

Belongs to the G-protein coupled receptor 1 family. In terms of tissue distribution, expressed in a subset of sensory neurons located in the apical layer of the vomeronasal organ.

The protein localises to the cell membrane. Functionally, putative pheromone receptor implicated in the regulation of social and reproductive behavior. The chain is Vomeronasal type-1 receptor A8 from Mus musculus (Mouse).